We begin with the raw amino-acid sequence, 162 residues long: MTDLYIDADACPVKAEAERVAVRHGVRMFLVSNGGIRPPAHPLVESIFVPEGPDVADMWIADRARTGDVVVTSDIPLAAKVVAAGALVVKPNGETLTQANIGNALATRDLMADLRSADPFRQGSGRPFSKADRSRFLDALERAMRKAQEAGRSASGGSEAGS.

Belongs to the UPF0178 family.

This is UPF0178 protein RSKD131_2223 from Cereibacter sphaeroides (strain KD131 / KCTC 12085) (Rhodobacter sphaeroides).